We begin with the raw amino-acid sequence, 232 residues long: Phosphoglycolate phosphatase (232 aa).

The Nucleophile role is filled by D13. Residues D13, D15, and D175 each contribute to the Mg(2+) site.

This sequence belongs to the HAD-like hydrolase superfamily. CbbY/CbbZ/Gph/YieH family. Monomer. Mg(2+) serves as cofactor. Chloride is required as a cofactor.

It catalyses the reaction 2-phosphoglycolate + H2O = glycolate + phosphate. Its pathway is organic acid metabolism; glycolate biosynthesis; glycolate from 2-phosphoglycolate: step 1/1. Functionally, specifically catalyzes the dephosphorylation of 2-phosphoglycolate. Is involved in the dissimilation of the intracellular 2-phosphoglycolate formed during the DNA repair of 3'-phosphoglycolate ends, a major class of DNA lesions induced by oxidative stress. The sequence is that of Phosphoglycolate phosphatase from Yersinia pestis.